A 535-amino-acid polypeptide reads, in one-letter code: Light-independent protochlorophyllide reductase subunit B (535 aa).

D36 serves as a coordination point for [4Fe-4S] cluster. D292 (proton donor) is an active-site residue. A substrate-binding site is contributed by 428–429; it reads GL. The tract at residues 447–483 is disordered; sequence SDDAAKAEPDQPVSNAHGHTESKTVSQGEPIASDEGG.

This sequence belongs to the ChlB/BchB/BchZ family. As to quaternary structure, protochlorophyllide reductase is composed of three subunits; BchL, BchN and BchB. Forms a heterotetramer of two BchB and two BchN subunits. It depends on [4Fe-4S] cluster as a cofactor.

It carries out the reaction chlorophyllide a + oxidized 2[4Fe-4S]-[ferredoxin] + 2 ADP + 2 phosphate = protochlorophyllide a + reduced 2[4Fe-4S]-[ferredoxin] + 2 ATP + 2 H2O. It functions in the pathway porphyrin-containing compound metabolism; bacteriochlorophyll biosynthesis (light-independent). Component of the dark-operative protochlorophyllide reductase (DPOR) that uses Mg-ATP and reduced ferredoxin to reduce ring D of protochlorophyllide (Pchlide) to form chlorophyllide a (Chlide). This reaction is light-independent. The NB-protein (BchN-BchB) is the catalytic component of the complex. This is Light-independent protochlorophyllide reductase subunit B from Chlorobium phaeobacteroides (strain DSM 266 / SMG 266 / 2430).